Consider the following 359-residue polypeptide: Src kinase-associated phosphoprotein 1 (359 aa).

Positions 107-210 (NVIKQGYLEK…WVDQISFLLK (104 aa)) constitute a PH domain. 3 positions are modified to phosphotyrosine: Tyr-142, Tyr-219, and Tyr-232. Over residues 219–237 (YEEDEEEEEKEETYDDIDG) the composition is skewed to acidic residues. Residues 219–239 (YEEDEEEEEKEETYDDIDGFD) are disordered. Residues Tyr-271 and Tyr-295 each carry the phosphotyrosine; by FYN modification. Positions 290 to 295 (RKGVDY) are interaction with FYB1. In terms of domain architecture, SH3 spans 294–355 (DYASYYQGLW…PKEYLTTAFE (62 aa)).

The protein belongs to the SKAP family. As to quaternary structure, homodimer. Interacts with FYN. Interacts with PTPRC. Interacts with GRB2 when phosphorylated on Tyr-271. Interacts with FYB1, which is required for SKAP2 protein stability. Part of a complex consisting of SKAP1, FYB1 and CLNK. Interacts with RASGRP1. Interacts with FYB2. In terms of processing, phosphorylated on tyrosines. Phosphorylation by FYN on Tyr-271 is required for GRB2 interaction. Phosphorylation by FYN on Tyr-295 abolishes interaction with FYB1. Tyr-232 is dephosphorylated by PTPRC. Highly expressed in thymocytes and peripheral blood lymphocytes. Also expressed in spleen cells and testis. Present in T-cells (at protein level).

It localises to the cytoplasm. The protein localises to the nucleus. Its subcellular location is the cell membrane. Its function is as follows. Positively regulates T-cell receptor signaling by enhancing the MAP kinase pathway. Required for optimal conjugation between T-cells and antigen-presenting cells by promoting the clustering of integrin ITGAL on the surface of T-cells. May be involved in high affinity immunoglobulin epsilon receptor signaling in mast cells. In Homo sapiens (Human), this protein is Src kinase-associated phosphoprotein 1 (SKAP1).